We begin with the raw amino-acid sequence, 362 residues long: Biotin synthase (362 aa).

Positions 46–273 (NEVQVSTLLS…ASHVRLSAGR (228 aa)) constitute a Radical SAM core domain. C61, C65, and C68 together coordinate [4Fe-4S] cluster. Residues C105, C136, C196, and R268 each contribute to the [2Fe-2S] cluster site.

This sequence belongs to the radical SAM superfamily. Biotin synthase family. As to quaternary structure, homodimer. [4Fe-4S] cluster serves as cofactor. Requires [2Fe-2S] cluster as cofactor.

The enzyme catalyses (4R,5S)-dethiobiotin + (sulfur carrier)-SH + 2 reduced [2Fe-2S]-[ferredoxin] + 2 S-adenosyl-L-methionine = (sulfur carrier)-H + biotin + 2 5'-deoxyadenosine + 2 L-methionine + 2 oxidized [2Fe-2S]-[ferredoxin]. Its pathway is cofactor biosynthesis; biotin biosynthesis; biotin from 7,8-diaminononanoate: step 2/2. In terms of biological role, catalyzes the conversion of dethiobiotin (DTB) to biotin by the insertion of a sulfur atom into dethiobiotin via a radical-based mechanism. The protein is Biotin synthase of Aeromonas salmonicida (strain A449).